Consider the following 382-residue polypeptide: D-galactonate dehydratase (382 aa).

Aspartate 183 provides a ligand contact to Mg(2+). Histidine 185 acts as the Proton donor in catalysis. Mg(2+) is bound by residues glutamate 209 and glutamate 235. The active-site Proton acceptor is histidine 285.

The protein belongs to the mandelate racemase/muconate lactonizing enzyme family. GalD subfamily. It depends on Mg(2+) as a cofactor.

The catalysed reaction is D-galactonate = 2-dehydro-3-deoxy-D-galactonate + H2O. It functions in the pathway carbohydrate acid metabolism; D-galactonate degradation; D-glyceraldehyde 3-phosphate and pyruvate from D-galactonate: step 1/3. Catalyzes the dehydration of D-galactonate to 2-keto-3-deoxy-D-galactonate. This is D-galactonate dehydratase from Salmonella choleraesuis (strain SC-B67).